A 211-amino-acid polypeptide reads, in one-letter code: Probable calcium-binding protein CML11 (211 aa).

Disordered regions lie at residues 1–22 (MSEPATTTPTPTPAGDHDAAAT) and 40–60 (SCSAQQQQQQQQQQEEPLGDD). Over residues 44–53 (QQQQQQQQQQ) the composition is skewed to low complexity. EF-hand domains are found at residues 60 to 95 (DQLGELREIFRSFDRNGDGSLTQLELGSLLRSLGLK), 96 to 131 (PSTDELDSLIQRADTNSNGLIEFSEFVALVAPELLY), 136 to 171 (YSEDQIRRLFNIFDRDGNGFITAAELAHSMAKLGHA), and 172 to 207 (LTVKELTGMIKEADTDGDGRISFQEFSRAITAAAFD). Ca(2+) is bound by residues Asp-73, Asn-75, Asp-77, Ser-79, Glu-84, Asp-109, Asn-111, Asn-113, Glu-120, Asp-149, Asp-151, Asn-153, Glu-160, Asp-185, Asp-187, Asp-189, Arg-191, and Glu-196.

Its function is as follows. Potential calcium sensor. This is Probable calcium-binding protein CML11 (CML11) from Oryza sativa subsp. japonica (Rice).